The sequence spans 185 residues: Elongation factor P (185 aa).

It belongs to the elongation factor P family.

The protein resides in the cytoplasm. Its pathway is protein biosynthesis; polypeptide chain elongation. Involved in peptide bond synthesis. Stimulates efficient translation and peptide-bond synthesis on native or reconstituted 70S ribosomes in vitro. Probably functions indirectly by altering the affinity of the ribosome for aminoacyl-tRNA, thus increasing their reactivity as acceptors for peptidyl transferase. The polypeptide is Elongation factor P (Paraburkholderia xenovorans (strain LB400)).